The sequence spans 108 residues: Thiosulfate sulfurtransferase GlpE (108 aa).

The region spanning 17–105 (QEKEAVLVDI…WQRQFPAEVA (89 aa)) is the Rhodanese domain. Residue Cys-65 is the Cysteine persulfide intermediate of the active site.

The protein belongs to the GlpE family.

The protein localises to the cytoplasm. The enzyme catalyses thiosulfate + hydrogen cyanide = thiocyanate + sulfite + 2 H(+). The catalysed reaction is thiosulfate + [thioredoxin]-dithiol = [thioredoxin]-disulfide + hydrogen sulfide + sulfite + 2 H(+). Its function is as follows. Transferase that catalyzes the transfer of sulfur from thiosulfate to thiophilic acceptors such as cyanide or dithiols. May function in a CysM-independent thiosulfate assimilation pathway by catalyzing the conversion of thiosulfate to sulfite, which can then be used for L-cysteine biosynthesis. This is Thiosulfate sulfurtransferase GlpE from Escherichia coli O157:H7.